Consider the following 382-residue polypeptide: E3 ubiquitin-protein ligase RNF133 (382 aa).

In terms of domain architecture, PA spans 65 to 167 (SSILKRVAGV…IKGMEILHLI (103 aa)). The helical transmembrane segment at 190–210 (YFVSFMIVTTATLAYFTFYHI) threads the bilayer. The segment at 256-297 (CVICFEAYKPNEIVRILTCKHFFHKNCIDPWILAHGTCPMCK) adopts an RING-type; atypical zinc-finger fold. A disordered region spans residues 328-382 (TLSPVEEETNYELPPARTSSKVTHVQEHPTSSANAGSQPPEAEETSHPSHGQQVL). The segment covering 344–364 (RTSSKVTHVQEHPTSSANAGS) has biased composition (polar residues).

As to quaternary structure, interacts with E3 ligase UBE2J1. Post-translationally, auto-ubiquitinated. Expression is testis-specific.

The protein localises to the endoplasmic reticulum membrane. It carries out the reaction S-ubiquitinyl-[E2 ubiquitin-conjugating enzyme]-L-cysteine + [acceptor protein]-L-lysine = [E2 ubiquitin-conjugating enzyme]-L-cysteine + N(6)-ubiquitinyl-[acceptor protein]-L-lysine.. It functions in the pathway protein modification; protein ubiquitination. Functionally, has E3 ubiquitin-protein ligase activity. Plays a role in male fecundity through the interaction with the E2 ubituitin-protein ligase UBE2J1. This chain is E3 ubiquitin-protein ligase RNF133 (Rnf133), found in Mus musculus (Mouse).